The following is a 223-amino-acid chain: Ubiquitin carboxyl-terminal hydrolase isozyme L1 (223 aa).

Residue Met1 is modified to N-acetylmethionine. The 220-residue stretch at 2–221 (QLKPMEINPE…VRFSAVALCK (220 aa)) folds into the UCH catalytic domain. Residues 5 to 10 (PMEINP) form an interaction with ubiquitin region. Catalysis depends on Cys90, which acts as the Nucleophile. Position 125 is a phosphoserine (Ser125). Residue His161 is the Proton donor of the active site. Residues 211–216 (EVRFSA) are interaction with ubiquitin. The S-farnesyl cysteine moiety is linked to residue Cys220. Residues 221–223 (KAA) constitute a propeptide, removed in mature form.

This sequence belongs to the peptidase C12 family. Monomer. Homodimer. Interacts with SNCA. Interacts with COPS5. O-glycosylated. As to expression, found in neuronal cell bodies and processes throughout the neocortex (at protein level). Expressed in neurons and cells of the diffuse neuroendocrine system and their tumors. Weakly expressed in ovary. Down-regulated in brains from Parkinson disease and Alzheimer disease patients.

It localises to the cytoplasm. The protein resides in the endoplasmic reticulum membrane. It carries out the reaction Thiol-dependent hydrolysis of ester, thioester, amide, peptide and isopeptide bonds formed by the C-terminal Gly of ubiquitin (a 76-residue protein attached to proteins as an intracellular targeting signal).. Functionally, deubiquitinase that plays a role in the regulation of several processes such as maintenance of synaptic function, cardiac function, inflammatory response or osteoclastogenesis. Abrogates the ubiquitination of multiple proteins including WWTR1/TAZ, EGFR, HIF1A and beta-site amyloid precursor protein cleaving enzyme 1/BACE1. In addition, recognizes and hydrolyzes a peptide bond at the C-terminal glycine of ubiquitin to maintain a stable pool of monoubiquitin that is a key requirement for the ubiquitin-proteasome and the autophagy-lysosome pathways. Regulates amyloid precursor protein/APP processing by promoting BACE1 degradation resulting in decreased amyloid beta production. Plays a role in the immune response by regulating the ability of MHC I molecules to reach cross-presentation compartments competent for generating Ag-MHC I complexes. Mediates the 'Lys-48'-linked deubiquitination of the transcriptional coactivator WWTR1/TAZ leading to its stabilization and inhibition of osteoclastogenesis. Deubiquitinates and stabilizes epidermal growth factor receptor EGFR to prevent its degradation and to activate its downstream mediators. Modulates oxidative activity in skeletal muscle by regulating key mitochondrial oxidative proteins. Enhances the activity of hypoxia-inducible factor 1-alpha/HIF1A by abrogateing its VHL E3 ligase-mediated ubiquitination and consequently inhibiting its degradation. The sequence is that of Ubiquitin carboxyl-terminal hydrolase isozyme L1 (UCHL1) from Homo sapiens (Human).